Here is a 40-residue protein sequence, read N- to C-terminus: Photosystem II reaction center protein X (40 aa).

The chain crosses the membrane as a helical span at residues 10 to 30 (FFYSILFGAIVLGLLGGGFIF).

The protein belongs to the PsbX family. Type 1 subfamily. PSII is composed of 1 copy each of membrane proteins PsbA, PsbB, PsbC, PsbD, PsbE, PsbF, PsbH, PsbI, PsbJ, PsbK, PsbL, PsbM, PsbT, PsbX, PsbY, PsbZ, Psb30/Ycf12, peripheral proteins PsbO, CyanoQ (PsbQ), PsbU, PsbV and a large number of cofactors. It forms dimeric complexes.

It localises to the cellular thylakoid membrane. In terms of biological role, involved in the binding and/or turnover of quinones at the Q(B) site of photosystem II (PSII). PSII is a light-driven water plastoquinone oxidoreductase, using light energy to abstract electrons from H(2)O, generating a proton gradient subsequently used for ATP formation. This is Photosystem II reaction center protein X from Acaryochloris marina (strain MBIC 11017).